A 363-amino-acid polypeptide reads, in one-letter code: Galactokinase (363 aa).

A substrate-binding site is contributed by 16-19 (EHTD). Residues serine 50 and 103 to 109 (GSGLSSS) each bind ATP. 2 residues coordinate Mg(2+): serine 109 and glutamate 141. The Proton acceptor role is filled by aspartate 153. Residue tyrosine 205 participates in substrate binding.

This sequence belongs to the GHMP kinase family. GalK subfamily.

Its subcellular location is the cytoplasm. The enzyme catalyses alpha-D-galactose + ATP = alpha-D-galactose 1-phosphate + ADP + H(+). The protein operates within carbohydrate metabolism; galactose metabolism. Functionally, catalyzes the transfer of the gamma-phosphate of ATP to D-galactose to form alpha-D-galactose-1-phosphate (Gal-1-P). The polypeptide is Galactokinase (Mycobacterium bovis (strain ATCC BAA-935 / AF2122/97)).